The sequence spans 632 residues: tRNA-guanine(15) transglycosylase (632 aa).

Aspartate 86 serves as the catalytic Nucleophile. The substrate site is built by aspartate 121 and glycine 186. The 76-residue stretch at 553–628 (NLRVFVKNES…IAVKIHEGRD (76 aa)) folds into the PUA domain.

Belongs to the archaeosine tRNA-ribosyltransferase family. Requires Zn(2+) as cofactor.

It carries out the reaction guanosine(15) in tRNA + 7-cyano-7-deazaguanine = 7-cyano-7-carbaguanosine(15) in tRNA + guanine. The protein operates within tRNA modification; archaeosine-tRNA biosynthesis. Functionally, exchanges the guanine residue with 7-cyano-7-deazaguanine (preQ0) at position 15 in the dihydrouridine loop (D-loop) of archaeal tRNAs. The sequence is that of tRNA-guanine(15) transglycosylase from Thermoplasma volcanium (strain ATCC 51530 / DSM 4299 / JCM 9571 / NBRC 15438 / GSS1).